A 314-amino-acid polypeptide reads, in one-letter code: DNA-directed RNA polymerase subunit alpha (314 aa).

Residues 1 to 228 (MIEIEKPKIE…EHLNIFVGLT (228 aa)) form an alpha N-terminal domain (alpha-NTD) region. Residues 246–314 (EKVLEMTIEE…ELGLGLRKDD (69 aa)) are alpha C-terminal domain (alpha-CTD).

The protein belongs to the RNA polymerase alpha chain family. As to quaternary structure, homodimer. The RNAP catalytic core consists of 2 alpha, 1 beta, 1 beta' and 1 omega subunit. When a sigma factor is associated with the core the holoenzyme is formed, which can initiate transcription.

It carries out the reaction RNA(n) + a ribonucleoside 5'-triphosphate = RNA(n+1) + diphosphate. Functionally, DNA-dependent RNA polymerase catalyzes the transcription of DNA into RNA using the four ribonucleoside triphosphates as substrates. The polypeptide is DNA-directed RNA polymerase subunit alpha (Bacillus velezensis (strain DSM 23117 / BGSC 10A6 / LMG 26770 / FZB42) (Bacillus amyloliquefaciens subsp. plantarum)).